A 491-amino-acid polypeptide reads, in one-letter code: Argininosuccinate lyase (491 aa).

The protein belongs to the lyase 1 family. Argininosuccinate lyase subfamily.

The protein resides in the cytoplasm. The catalysed reaction is 2-(N(omega)-L-arginino)succinate = fumarate + L-arginine. It functions in the pathway amino-acid biosynthesis; L-arginine biosynthesis; L-arginine from L-ornithine and carbamoyl phosphate: step 3/3. The sequence is that of Argininosuccinate lyase from Methanococcoides burtonii (strain DSM 6242 / NBRC 107633 / OCM 468 / ACE-M).